The chain runs to 341 residues: NADH-quinone oxidoreductase subunit H 1 (341 aa).

The next 8 helical transmembrane spans lie at L13–I33, G82–I102, V115–G135, I161–V181, M190–L210, Y248–P268, W277–M297, and L313–L333.

It belongs to the complex I subunit 1 family. NDH-1 is composed of 14 different subunits. Subunits NuoA, H, J, K, L, M, N constitute the membrane sector of the complex.

It is found in the cell inner membrane. The catalysed reaction is a quinone + NADH + 5 H(+)(in) = a quinol + NAD(+) + 4 H(+)(out). NDH-1 shuttles electrons from NADH, via FMN and iron-sulfur (Fe-S) centers, to quinones in the respiratory chain. The immediate electron acceptor for the enzyme in this species is believed to be ubiquinone. Couples the redox reaction to proton translocation (for every two electrons transferred, four hydrogen ions are translocated across the cytoplasmic membrane), and thus conserves the redox energy in a proton gradient. This subunit may bind ubiquinone. In Rhodopseudomonas palustris (strain ATCC BAA-98 / CGA009), this protein is NADH-quinone oxidoreductase subunit H 1.